The following is a 189-amino-acid chain: MASKRALVILAKGAEEMETVIPVDVMRRAGIKVTIAGLAGKDPVQCSRDVVICPDASLEDAKKEGPYDVVVLPGGNLGAQNLSESAAVKEILKEQENRKGLIAAICAGPTALLAHEIGFGSKVTTHPLAKDKMMNGGHYTYSENRVEKDGLILTSRGPGTSFEFALAIVEALNGKEVAAQVKAPLVLKD.

The residue at position 2 (alanine 2) is an N-acetylalanine. S-palmitoyl cysteine attachment occurs at residues cysteine 46 and cysteine 53. At tyrosine 67 the chain carries Phosphotyrosine. Cysteine 106 (nucleophile) is an active-site residue. At cysteine 106 the chain carries Cysteine sulfinic acid (-SO2H); alternate. Cysteine 106 is lipidated: S-palmitoyl cysteine; alternate. Residue histidine 126 is part of the active site. Lysine 130 participates in a covalent cross-link: Glycyl lysine isopeptide (Lys-Gly) (interchain with G-Cter in SUMO). Lysine 148 carries the N6-acetyllysine modification. Lysine 182 carries the post-translational modification N6-succinyllysine.

The protein belongs to the peptidase C56 family. As to quaternary structure, homodimer. Binds EFCAB6/DJBP and PIAS2. Part of a ternary complex containing PARK7, EFCAB6/DJBP and AR. Interacts (via N-terminus) with OTUD7B. Interacts with BBS1, HIPK1, CLCF1 and MTERF. Forms a complex with PINK1 and PRKN. Interacts (via C-terminus) with NCF1; the interaction is enhanced by LPS and modulates NCF1 phosphorylation and membrane translocation. Interacts with NENF. The cofactor is Deglycase activity does not require glutathione as a cofactor, however, glycated glutathione constitutes a PARK7 substrate.. Sumoylated on Lys-130 by PIAS2 or PIAS4; which is essential for cell-growth promoting activity and transforming activity. Post-translationally, undergoes cleavage of a C-terminal peptide and subsequent activation of protease activity in response to oxidative stress.

It localises to the cell membrane. The protein resides in the cytoplasm. Its subcellular location is the nucleus. It is found in the membrane raft. The protein localises to the mitochondrion. It localises to the endoplasmic reticulum. It catalyses the reaction N(omega)-(1-hydroxy-2-oxopropyl)-L-arginyl-[protein] + H2O = lactate + L-arginyl-[protein] + H(+). The enzyme catalyses N(6)-(1-hydroxy-2-oxopropyl)-L-lysyl-[protein] + H2O = lactate + L-lysyl-[protein] + H(+). The catalysed reaction is S-(1-hydroxy-2-oxopropyl)-L-cysteinyl-[protein] + H2O = lactate + L-cysteinyl-[protein] + H(+). It carries out the reaction N(omega)-(1-hydroxy-2-oxoethyl)-L-arginyl-[protein] + H2O = L-arginyl-[protein] + glycolate + H(+). It catalyses the reaction N(6)-(1-hydroxy-2-oxoethyl)-L-lysyl-[protein] + H2O = glycolate + L-lysyl-[protein] + H(+). The enzyme catalyses S-(1-hydroxy-2-oxoethyl)-L-cysteinyl-[protein] + H2O = glycolate + L-cysteinyl-[protein] + H(+). The catalysed reaction is N(2)-(1-hydroxy-2-oxopropyl)-dGTP + H2O = lactate + dGTP + H(+). It carries out the reaction N(2)-(1-hydroxy-2-oxopropyl)-GTP + H2O = lactate + GTP + H(+). It catalyses the reaction N(2)-(1-hydroxy-2-oxopropyl)-GDP + H2O = lactate + GDP + H(+). The enzyme catalyses N(2)-(1-hydroxy-2-oxopropyl)-GMP + H2O = lactate + GMP + H(+). The catalysed reaction is N(2)-(1-hydroxy-2-oxoethyl)-dGTP + H2O = dGTP + glycolate + H(+). It carries out the reaction N(2)-(1-hydroxy-2-oxoethyl)-GTP + H2O = glycolate + GTP + H(+). It catalyses the reaction N(2)-(1-hydroxy-2-oxoethyl)-GDP + H2O = glycolate + GDP + H(+). The enzyme catalyses N(2)-(1-hydroxy-2-oxoethyl)-GMP + H2O = glycolate + GMP + H(+). The catalysed reaction is an N(2)-(1-hydroxy-2-oxopropyl)-guanosine in RNA + H2O = a guanosine in RNA + lactate + H(+). It carries out the reaction an N(2)-(1-hydroxy-2-oxopropyl)-2'-deoxyguanosine in DNA + H2O = a 2'-deoxyguanosine in DNA + lactate + H(+). It catalyses the reaction an N(2)-(1-hydroxy-2-oxoethyl)-guanosine in RNA + H2O = a guanosine in RNA + glycolate + H(+). The enzyme catalyses an N(2)-(1-hydroxy-2-oxoethyl)-2'-deoxyguanosine in DNA + H2O = a 2'-deoxyguanosine in DNA + glycolate + H(+). In terms of biological role, multifunctional protein with controversial molecular function which plays an important role in cell protection against oxidative stress and cell death acting as oxidative stress sensor and redox-sensitive chaperone and protease. It is involved in neuroprotective mechanisms like the stabilization of NFE2L2 and PINK1 proteins, male fertility as a positive regulator of androgen signaling pathway as well as cell growth and transformation through, for instance, the modulation of NF-kappa-B signaling pathway. Has been described as a protein and nucleotide deglycase that catalyzes the deglycation of the Maillard adducts formed between amino groups of proteins or nucleotides and reactive carbonyl groups of glyoxals. But this function is rebuted by other works. As a protein deglycase, repairs methylglyoxal- and glyoxal-glycated proteins, and releases repaired proteins and lactate or glycolate, respectively. Deglycates cysteine, arginine and lysine residues in proteins, and thus reactivates these proteins by reversing glycation by glyoxals. Acts on early glycation intermediates (hemithioacetals and aminocarbinols), preventing the formation of advanced glycation endproducts (AGE) that cause irreversible damage. Also functions as a nucleotide deglycase able to repair glycated guanine in the free nucleotide pool (GTP, GDP, GMP, dGTP) and in DNA and RNA. Is thus involved in a major nucleotide repair system named guanine glycation repair (GG repair), dedicated to reversing methylglyoxal and glyoxal damage via nucleotide sanitization and direct nucleic acid repair. Protects histones from adduction by methylglyoxal, controls the levels of methylglyoxal-derived argininine modifications on chromatin. Able to remove the glycations and restore histone 3, histone glycation disrupts both local and global chromatin architecture by altering histone-DNA interactions as well as histone acetylation and ubiquitination levels. Displays a very low glyoxalase activity that may reflect its deglycase activity. Eliminates hydrogen peroxide and protects cells against hydrogen peroxide-induced cell death. Required for correct mitochondrial morphology and function as well as for autophagy of dysfunctional mitochondria. Plays a role in regulating expression or stability of the mitochondrial uncoupling proteins SLC25A14 and SLC25A27 in dopaminergic neurons of the substantia nigra pars compacta and attenuates the oxidative stress induced by calcium entry into the neurons via L-type channels during pacemaking. Regulates astrocyte inflammatory responses, may modulate lipid rafts-dependent endocytosis in astrocytes and neuronal cells. In pancreatic islets, involved in the maintenance of mitochondrial reactive oxygen species (ROS) levels and glucose homeostasis in an age- and diet dependent manner. Protects pancreatic beta cells from cell death induced by inflammatory and cytotoxic setting. Binds to a number of mRNAs containing multiple copies of GG or CC motifs and partially inhibits their translation but dissociates following oxidative stress. Metal-binding protein able to bind copper as well as toxic mercury ions, enhances the cell protection mechanism against induced metal toxicity. In macrophages, interacts with the NADPH oxidase subunit NCF1 to direct NADPH oxidase-dependent ROS production, and protects against sepsis. The sequence is that of Parkinson disease protein 7 homolog from Chlorocebus aethiops (Green monkey).